Reading from the N-terminus, the 260-residue chain is Small ribosomal subunit protein cS22 (260 aa).

The N-terminal 62 residues, 1 to 62 (MATISSILPC…TNPPLLKVRA (62 aa)), are a transit peptide targeting the chloroplast. The span at 63-78 (VVTEETSSSSTASSSS) shows a compositional bias: low complexity. The interval 63–83 (VVTEETSSSSTASSSSDGEGA) is disordered. 2 RRM domains span residues 84 to 162 (RRLY…ITEK) and 184 to 260 (YKVY…VNKA).

As to quaternary structure, component of the chloroplast small ribosomal subunit (SSU). Mature 70S chloroplast ribosomes of higher plants consist of a small (30S) and a large (50S) subunit. The 30S small subunit contains 1 molecule of ribosomal RNA (16S rRNA) and 24 different proteins. The 50S large subunit contains 3 rRNA molecules (23S, 5S and 4.5S rRNA) and 33 different proteins.

It localises to the plastid. The protein localises to the chloroplast. In terms of biological role, component of the chloroplast ribosome (chloro-ribosome), a dedicated translation machinery responsible for the synthesis of chloroplast genome-encoded proteins, including proteins of the transcription and translation machinery and components of the photosynthetic apparatus. cS22 may have a role in the recruitment of stored chloroplast mRNAs for active protein synthesis. This Spinacia oleracea (Spinach) protein is Small ribosomal subunit protein cS22 (PSRP2).